The sequence spans 213 residues: uncharacterized protein (213 aa).

Positions 1-21 are cleaved as a signal peptide; the sequence is MKKILFLTVICFCLSSIKAYA.

This is an uncharacterized protein from Rickettsia prowazekii (strain Madrid E).